A 231-amino-acid polypeptide reads, in one-letter code: Ribose-5-phosphate isomerase A (231 aa).

Substrate is bound by residues T32–T35, D85–D88, and K98–G101. E107 functions as the Proton acceptor in the catalytic mechanism. K125 serves as a coordination point for substrate.

Belongs to the ribose 5-phosphate isomerase family. In terms of assembly, homodimer.

It carries out the reaction aldehydo-D-ribose 5-phosphate = D-ribulose 5-phosphate. The protein operates within carbohydrate degradation; pentose phosphate pathway; D-ribose 5-phosphate from D-ribulose 5-phosphate (non-oxidative stage): step 1/1. In terms of biological role, catalyzes the reversible conversion of ribose-5-phosphate to ribulose 5-phosphate. The protein is Ribose-5-phosphate isomerase A of Paraburkholderia phymatum (strain DSM 17167 / CIP 108236 / LMG 21445 / STM815) (Burkholderia phymatum).